The primary structure comprises 243 residues: 1-(5-phosphoribosyl)-5-[(5-phosphoribosylamino)methylideneamino] imidazole-4-carboxamide isomerase (243 aa).

Asp-8 functions as the Proton acceptor in the catalytic mechanism. Asp-130 acts as the Proton donor in catalysis.

It belongs to the HisA/HisF family.

It is found in the cytoplasm. The catalysed reaction is 1-(5-phospho-beta-D-ribosyl)-5-[(5-phospho-beta-D-ribosylamino)methylideneamino]imidazole-4-carboxamide = 5-[(5-phospho-1-deoxy-D-ribulos-1-ylimino)methylamino]-1-(5-phospho-beta-D-ribosyl)imidazole-4-carboxamide. The protein operates within amino-acid biosynthesis; L-histidine biosynthesis; L-histidine from 5-phospho-alpha-D-ribose 1-diphosphate: step 4/9. This Saccharophagus degradans (strain 2-40 / ATCC 43961 / DSM 17024) protein is 1-(5-phosphoribosyl)-5-[(5-phosphoribosylamino)methylideneamino] imidazole-4-carboxamide isomerase.